We begin with the raw amino-acid sequence, 1415 residues long: Bridge-like lipid transfer protein family member 3B (1415 aa).

Positions 3 to 94 (GLIKKQILKH…DKVIMEMSTC (92 aa)) constitute a Chorein N-terminal domain. Disordered regions lie at residues 267–300 (STEQ…STTP) and 882–904 (KSPL…SEGV). Residues 275–300 (ASETTQSPTPPVSSQQVKNPQTSTTP) show a composition bias toward polar residues. Residues 1367 to 1404 (KAAGISKEQLVEENECLKQELAKTKMALAESHMERDRL) are a coiled coil.

It localises to the cytoplasm. The protein localises to the cytosol. The protein resides in the early endosome. Its function is as follows. Tube-forming lipid transport protein which mediates the transfer of lipids between membranes at organelle contact sites. Required for retrograde traffic of vesicle clusters in the early endocytic pathway to the Golgi complex. The protein is Bridge-like lipid transfer protein family member 3B (bltp3b) of Xenopus laevis (African clawed frog).